Reading from the N-terminus, the 503-residue chain is MEFSVKSGSPEKQRSACIVVGVFEPRRLSPIAEQLDKISDGYISALLRRGELEGKPGQTLLLHHVPNVLSERILLIGCGKERELDERQYKQVIQKTINTLNDTGSMEAVCFLTELHVKGRNNYWKVRQAVETAKETLYSFDQLKTNKSEPRRPLRKMVFNVPTRRELTSGERAIQHGLAIAAGIKAAKDLGNMPPNICNAAYLASQARQLADSYSKNVITRVIGEQQMKELGMHSYLAVGQGSQNESLMSVIEYKGNASEDARPIVLVGKGLTFDSGGISIKPSEGMDEMKYDMCGAAAVYGVMRMVAELQLPINVIGVLAGCENMPGGRAYRPGDVLTTMSGQTVEVLNTDAEGRLVLCDVLTYVERFEPEAVIDVATLTGACVIALGHHITGLMANHNPLAHELIAASEQSGDRAWRLPLGDEYQEQLESNFADMANIGGRPGGAITAGCFLSRFTRKYNWAHLDIAGTAWRSGKAKGATGRPVALLAQFLLNRAGFNGEE.

Mn(2+) is bound by residues K270 and D275. The active site involves K282. Residues D293, D352, and E354 each contribute to the Mn(2+) site. R356 is an active-site residue.

Belongs to the peptidase M17 family. Requires Mn(2+) as cofactor.

The protein resides in the cytoplasm. It carries out the reaction Release of an N-terminal amino acid, Xaa-|-Yaa-, in which Xaa is preferably Leu, but may be other amino acids including Pro although not Arg or Lys, and Yaa may be Pro. Amino acid amides and methyl esters are also readily hydrolyzed, but rates on arylamides are exceedingly low.. The enzyme catalyses Release of an N-terminal amino acid, preferentially leucine, but not glutamic or aspartic acids.. Functionally, presumably involved in the processing and regular turnover of intracellular proteins. Catalyzes the removal of unsubstituted N-terminal amino acids from various peptides. This is Probable cytosol aminopeptidase from Escherichia coli O139:H28 (strain E24377A / ETEC).